We begin with the raw amino-acid sequence, 218 residues long: Adenylate kinase (218 aa).

Position 10 to 15 (10 to 15) interacts with ATP; the sequence is GAGKGT. The interval 30-59 is NMP; that stretch reads STGDMFRAAMANQTEMGRLAKSFIDKGELV. AMP-binding positions include T31, R36, 57–59, 86–89, and Q93; these read ELV and GYPR. An LID region spans residues 127–165; it reads GRFICRSCGSTYHKVFNPTKVEGTCDVCGGHEFFQREDD. R128 is a binding site for ATP. C131 and C134 together coordinate Zn(2+). 137–138 provides a ligand contact to ATP; sequence TY. Zn(2+) is bound by residues C151 and C154. AMP is bound by residues R162 and R173. Residue Q201 coordinates ATP.

The protein belongs to the adenylate kinase family. As to quaternary structure, monomer.

It is found in the cytoplasm. The enzyme catalyses AMP + ATP = 2 ADP. It functions in the pathway purine metabolism; AMP biosynthesis via salvage pathway; AMP from ADP: step 1/1. Its function is as follows. Catalyzes the reversible transfer of the terminal phosphate group between ATP and AMP. Plays an important role in cellular energy homeostasis and in adenine nucleotide metabolism. The protein is Adenylate kinase of Streptococcus thermophilus (strain CNRZ 1066).